The chain runs to 658 residues: Pentatricopeptide repeat-containing protein At1g69290 (658 aa).

Disordered regions lie at residues 1–23 (MFRK…ESPS) and 39–61 (TLSP…KSSF). The segment covering 50-61 (PKTLTPDQKSSF) has biased composition (polar residues). PPR repeat units lie at residues 214 to 249 (DLVA…GVKP), 250 to 284 (DELS…GFAS), 285 to 320 (RRIL…GEES), 323 to 353 (SVET…AQKL), 361 to 395 (DSSV…GGGS), 397 to 431 (GIGV…GLQL), 432 to 466 (DVEI…RVVD), 467 to 497 (LKGS…VVED), 503 to 537 (NSHD…RYEP), 538 to 568 (NNQT…IKGK), and 581 to 615 (DHAL…KIFV).

It belongs to the PPR family. P subfamily.

In Arabidopsis thaliana (Mouse-ear cress), this protein is Pentatricopeptide repeat-containing protein At1g69290.